Reading from the N-terminus, the 340-residue chain is Coproporphyrin III ferrochelatase (340 aa).

The Fe-coproporphyrin III site is built by S52 and Y121. Fe(2+) is bound by residues H177 and E260.

This sequence belongs to the ferrochelatase family.

The protein localises to the cytoplasm. It catalyses the reaction Fe-coproporphyrin III + 2 H(+) = coproporphyrin III + Fe(2+). Its pathway is porphyrin-containing compound metabolism; protoheme biosynthesis. Its function is as follows. Involved in coproporphyrin-dependent heme b biosynthesis. Catalyzes the insertion of ferrous iron into coproporphyrin III to form Fe-coproporphyrin III. This chain is Coproporphyrin III ferrochelatase, found in Mycobacteroides abscessus (strain ATCC 19977 / DSM 44196 / CCUG 20993 / CIP 104536 / JCM 13569 / NCTC 13031 / TMC 1543 / L948) (Mycobacterium abscessus).